We begin with the raw amino-acid sequence, 193 residues long: Cuticle protein 18.7 (193 aa).

In terms of biological role, component of the cuticle of migratory locust which contains more than 100 different structural proteins. This Locusta migratoria (Migratory locust) protein is Cuticle protein 18.7.